The chain runs to 101 residues: Small ribosomal subunit protein uS14 (101 aa).

The protein belongs to the universal ribosomal protein uS14 family. Part of the 30S ribosomal subunit. Contacts proteins S3 and S10.

In terms of biological role, binds 16S rRNA, required for the assembly of 30S particles and may also be responsible for determining the conformation of the 16S rRNA at the A site. In Methylobacterium sp. (strain 4-46), this protein is Small ribosomal subunit protein uS14.